The primary structure comprises 329 residues: 4-hydroxythreonine-4-phosphate dehydrogenase (329 aa).

Positions 136 and 137 each coordinate substrate. Residues His-166, His-211, and His-266 each contribute to the a divalent metal cation site. Substrate-binding residues include Lys-274, Asn-283, and Arg-292.

It belongs to the PdxA family. As to quaternary structure, homodimer. It depends on Zn(2+) as a cofactor. Mg(2+) is required as a cofactor. The cofactor is Co(2+).

The protein localises to the cytoplasm. The catalysed reaction is 4-(phosphooxy)-L-threonine + NAD(+) = 3-amino-2-oxopropyl phosphate + CO2 + NADH. Its pathway is cofactor biosynthesis; pyridoxine 5'-phosphate biosynthesis; pyridoxine 5'-phosphate from D-erythrose 4-phosphate: step 4/5. Its function is as follows. Catalyzes the NAD(P)-dependent oxidation of 4-(phosphooxy)-L-threonine (HTP) into 2-amino-3-oxo-4-(phosphooxy)butyric acid which spontaneously decarboxylates to form 3-amino-2-oxopropyl phosphate (AHAP). The polypeptide is 4-hydroxythreonine-4-phosphate dehydrogenase (Escherichia coli O7:K1 (strain IAI39 / ExPEC)).